We begin with the raw amino-acid sequence, 577 residues long: Moesin (577 aa).

An FERM domain is found at 2–295 (PKTISVRVTT…GNHELYMRRR (294 aa)). The residue at position 74 (S74) is a Phosphoserine. The residue at position 79 (K79) is an N6-acetyllysine. The residue at position 83 (K83) is an N6-succinyllysine. The [IL]-x-C-x-x-[DE] motif motif lies at 115-120 (IYCPPE). At Y116 the chain carries Phosphotyrosine. At C117 the chain carries S-nitrosocysteine. K139 and K165 each carry N6-acetyllysine. Disordered stretches follow at residues 322-342 (LLEN…KIER), 358-419 (TKKA…QLAS), and 468-518 (STPH…NERV). Residues 358–401 (TKKAQQELEEQTRRALELEQERKRAQSEAEKLAKERQEAEEAKE) are compositionally biased toward basic and acidic residues. A Phosphoserine modification is found at S407. The segment covering 492 to 518 (AELRADAMAKDRSEEERTTEAEKNERV) has biased composition (basic and acidic residues). The residue at position 527 (S527) is a Phosphoserine. T558 carries the phosphothreonine; by ROCK2 and STK10 modification.

In terms of assembly, in resting T-cells, part of a PAG1-NHERF1-MSN complex which is disrupted upon TCR activation. Interacts with NHERF1. Interacts with PPP1R16B. Interacts with SELPLG and SYK; these interactions mediate the activation of SYK by SELPLG. Interacts with PDPN (via cytoplasmic domain); this interaction activates RHOA and promotes epithelial-mesenchymal transition. Interacts with SPN/CD43 cytoplasmic tail. Interacts with CD44. Interacts with ICAM2. Interacts with ICAM3 (via C-terminus). Interacts with PDZD8. Interacts with F-actin. Interacts with CD46. Interacts with PTPN6. In terms of processing, phosphorylation on Thr-558 by STK10 negatively regulates lymphocyte migration and polarization. Phosphorylation on Thr-558 is crucial for the formation of microvilli-like structures. Phosphorylation by ROCK2 suppresses the head-to-tail association of the N-terminal and C-terminal halves resulting in an opened conformation which is capable of actin and membrane-binding. S-nitrosylation of Cys-117 is induced by interferon-gamma and oxidatively-modified low-densitity lipoprotein (LDL(ox)) implicating the iNOS-S100A8/9 transnitrosylase complex.

The protein localises to the cell membrane. It localises to the cytoplasm. Its subcellular location is the cytoskeleton. It is found in the apical cell membrane. The protein resides in the cell projection. The protein localises to the microvillus membrane. It localises to the microvillus. In terms of biological role, ezrin-radixin-moesin (ERM) family protein that connects the actin cytoskeleton to the plasma membrane and thereby regulates the structure and function of specific domains of the cell cortex. Tethers actin filaments by oscillating between a resting and an activated state providing transient interactions between moesin and the actin cytoskeleton. Once phosphorylated on its C-terminal threonine, moesin is activated leading to interaction with F-actin and cytoskeletal rearrangement. These rearrangements regulate many cellular processes, including cell shape determination, membrane transport, and signal transduction. The role of moesin is particularly important in immunity acting on both T and B-cells homeostasis and self-tolerance, regulating lymphocyte egress from lymphoid organs. Modulates phagolysosomal biogenesis in macrophages. Also participates in immunologic synapse formation. This Mus musculus (Mouse) protein is Moesin.